A 77-amino-acid chain; its full sequence is Acyl carrier protein (77 aa).

The Carrier domain occupies 1-76; it reads MADFEKVKSI…DVTKFIDNLK (76 aa). An O-(pantetheine 4'-phosphoryl)serine modification is found at Ser-36.

The protein belongs to the acyl carrier protein (ACP) family. 4'-phosphopantetheine is transferred from CoA to a specific serine of apo-ACP by AcpS. This modification is essential for activity because fatty acids are bound in thioester linkage to the sulfhydryl of the prosthetic group.

Its subcellular location is the cytoplasm. The protein operates within lipid metabolism; fatty acid biosynthesis. Its function is as follows. Carrier of the growing fatty acid chain in fatty acid biosynthesis. The chain is Acyl carrier protein from Leptospira borgpetersenii serovar Hardjo-bovis (strain JB197).